Reading from the N-terminus, the 87-residue chain is DNA-directed RNA polymerase subunit omega (87 aa).

Belongs to the RNA polymerase subunit omega family. In terms of assembly, the RNAP catalytic core consists of 2 alpha, 1 beta, 1 beta' and 1 omega subunit. When a sigma factor is associated with the core the holoenzyme is formed, which can initiate transcription.

The catalysed reaction is RNA(n) + a ribonucleoside 5'-triphosphate = RNA(n+1) + diphosphate. Functionally, promotes RNA polymerase assembly. Latches the N- and C-terminal regions of the beta' subunit thereby facilitating its interaction with the beta and alpha subunits. The polypeptide is DNA-directed RNA polymerase subunit omega (Pseudomonas fluorescens (strain Pf0-1)).